A 127-amino-acid polypeptide reads, in one-letter code: Small ribosomal subunit protein eS8 (127 aa).

The interval 1–33 (MAIWQGKSMKKPSGGRAKMNRGKRKYELGREPA) is disordered.

The protein belongs to the eukaryotic ribosomal protein eS8 family. Part of the 30S ribosomal subunit.

This Methanothermobacter thermautotrophicus (strain ATCC 29096 / DSM 1053 / JCM 10044 / NBRC 100330 / Delta H) (Methanobacterium thermoautotrophicum) protein is Small ribosomal subunit protein eS8 (rps8e).